The chain runs to 110 residues: Protein YcgL (110 aa).

The region spanning 14-98 (MFCVIYRSSK…PPEDLLKQHL (85 aa)) is the YcgL domain. The segment at 88–110 (PPPEDLLKQHLSSVGQNTSHADR) is disordered. A compositionally biased stretch (polar residues) spans 97-110 (HLSSVGQNTSHADR).

In Salmonella schwarzengrund (strain CVM19633), this protein is Protein YcgL.